Consider the following 377-residue polypeptide: Chaperone protein DnaJ (377 aa).

In terms of domain architecture, J spans 4-69 (DYYEALGVTR…QKRAAYDRFG (66 aa)). Residues 135 to 213 (GKTAQIRVPT…CHGQGRVTQE (79 aa)) form a CR-type zinc finger. Residues C148, C151, C165, C168, C187, C190, C201, and C204 each coordinate Zn(2+). 4 CXXCXGXG motif repeats span residues 148–155 (CDECSGSG), 165–172 (CTMCSGSG), 187–194 (CPGCNGRG), and 201–208 (CEKCHGQG).

Belongs to the DnaJ family. As to quaternary structure, homodimer. Requires Zn(2+) as cofactor.

It localises to the cytoplasm. Its function is as follows. Participates actively in the response to hyperosmotic and heat shock by preventing the aggregation of stress-denatured proteins and by disaggregating proteins, also in an autonomous, DnaK-independent fashion. Unfolded proteins bind initially to DnaJ; upon interaction with the DnaJ-bound protein, DnaK hydrolyzes its bound ATP, resulting in the formation of a stable complex. GrpE releases ADP from DnaK; ATP binding to DnaK triggers the release of the substrate protein, thus completing the reaction cycle. Several rounds of ATP-dependent interactions between DnaJ, DnaK and GrpE are required for fully efficient folding. Also involved, together with DnaK and GrpE, in the DNA replication of plasmids through activation of initiation proteins. The protein is Chaperone protein DnaJ of Brucella ovis (strain ATCC 25840 / 63/290 / NCTC 10512).